Reading from the N-terminus, the 46-residue chain is Aspartate aminotransferase 1 (46 aa).

It belongs to the class-I pyridoxal-phosphate-dependent aminotransferase family. As to quaternary structure, homodimer. It depends on pyridoxal 5'-phosphate as a cofactor.

It carries out the reaction L-aspartate + 2-oxoglutarate = oxaloacetate + L-glutamate. Its function is as follows. Important for the metabolism of amino acids and Krebs-cycle related organic acids. In plants, it is involved in nitrogen metabolism and in aspects of carbon and energy metabolism. In Pseudotsuga menziesii (Douglas-fir), this protein is Aspartate aminotransferase 1.